The primary structure comprises 722 residues: Nucleolar protein 10 (722 aa).

WD repeat units follow at residues 50-90 (EMPT…LKFE), 174-213 (TDAA…RVAA), 228-266 (EGLP…PLLV), 270-308 (YYGL…VFSS), and 310-349 (EPQA…PAPR). Coiled-coil stretches lie at residues 423-476 (EYRK…ANVA) and 511-534 (SNVA…EEQE). Disordered stretches follow at residues 521-555 (LLEE…GWVQ), 572-607 (SYIQ…PRFY), 616-635 (RSFS…LEER), and 664-722 (TEKQ…RRPF). Positions 523 to 534 (EEEQEQAEEEQE) are enriched in acidic residues. Over residues 572–586 (SYIQRQERRQQDRNT) the composition is skewed to basic and acidic residues. A compositionally biased stretch (polar residues) spans 587–600 (RLQSSDTHTQQSHG). Residues 620–681 (DVSRKQKTHK…QAERDHHEER (62 aa)) adopt a coiled-coil conformation. Over residues 664 to 682 (TEKQRFQQQAERDHHEERR) the composition is skewed to basic and acidic residues. Composition is skewed to basic residues over residues 683-693 (RIRRSAGHLHS) and 702-722 (GGGR…RRPF).

It belongs to the WD repeat NOL10/ENP2 family.

Its subcellular location is the nucleus. The protein localises to the nucleolus. The polypeptide is Nucleolar protein 10 (nol10) (Danio rerio (Zebrafish)).